The following is a 460-amino-acid chain: Bifunctional protein GlmU (460 aa).

Residues 1 to 229 (MSHYAIILAA…FEESLGVNDR (229 aa)) form a pyrophosphorylase region. UDP-N-acetyl-alpha-D-glucosamine-binding positions include 8 to 11 (LAAG), lysine 22, glutamine 72, and 77 to 78 (GT). Aspartate 102 provides a ligand contact to Mg(2+). Residues glycine 139, glutamate 154, asparagine 169, and asparagine 227 each coordinate UDP-N-acetyl-alpha-D-glucosamine. Asparagine 227 contributes to the Mg(2+) binding site. Residues 230 to 250 (VALATAEDVMRRRINKAHMIN) form a linker region. The interval 251–460 (GVTFQNPNAT…KKPHHPSQQK (210 aa)) is N-acetyltransferase. The UDP-N-acetyl-alpha-D-glucosamine site is built by arginine 332 and lysine 350. The active-site Proton acceptor is histidine 362. Positions 365 and 376 each coordinate UDP-N-acetyl-alpha-D-glucosamine. Acetyl-CoA is bound by residues alanine 379, 385–386 (NY), serine 404, alanine 422, and arginine 439.

It in the N-terminal section; belongs to the N-acetylglucosamine-1-phosphate uridyltransferase family. This sequence in the C-terminal section; belongs to the transferase hexapeptide repeat family. In terms of assembly, homotrimer. Mg(2+) is required as a cofactor.

The protein resides in the cytoplasm. It catalyses the reaction alpha-D-glucosamine 1-phosphate + acetyl-CoA = N-acetyl-alpha-D-glucosamine 1-phosphate + CoA + H(+). The catalysed reaction is N-acetyl-alpha-D-glucosamine 1-phosphate + UTP + H(+) = UDP-N-acetyl-alpha-D-glucosamine + diphosphate. It participates in nucleotide-sugar biosynthesis; UDP-N-acetyl-alpha-D-glucosamine biosynthesis; N-acetyl-alpha-D-glucosamine 1-phosphate from alpha-D-glucosamine 6-phosphate (route II): step 2/2. Its pathway is nucleotide-sugar biosynthesis; UDP-N-acetyl-alpha-D-glucosamine biosynthesis; UDP-N-acetyl-alpha-D-glucosamine from N-acetyl-alpha-D-glucosamine 1-phosphate: step 1/1. It functions in the pathway bacterial outer membrane biogenesis; LPS lipid A biosynthesis. Its function is as follows. Catalyzes the last two sequential reactions in the de novo biosynthetic pathway for UDP-N-acetylglucosamine (UDP-GlcNAc). The C-terminal domain catalyzes the transfer of acetyl group from acetyl coenzyme A to glucosamine-1-phosphate (GlcN-1-P) to produce N-acetylglucosamine-1-phosphate (GlcNAc-1-P), which is converted into UDP-GlcNAc by the transfer of uridine 5-monophosphate (from uridine 5-triphosphate), a reaction catalyzed by the N-terminal domain. The chain is Bifunctional protein GlmU from Streptococcus thermophilus (strain CNRZ 1066).